We begin with the raw amino-acid sequence, 131 residues long: MARKVIDVRIVNAATAEQESFIKELSMELIHDVFPLYFSELDIQRFKKKGVLSLNNHYYQGTLKEAFQIMACLQMIHIILTKPSPHSDLSDQAIFEKNSKMLNDFGIYFPFAFSDFQKKTNKAFFGQRRLI.

This is an uncharacterized protein from Bacillus subtilis (strain 168).